The following is a 165-amino-acid chain: Protein phosphatase 1 regulatory subunit 14C (165 aa).

A compositionally biased stretch (low complexity) spans 1–12 (MSVATGSSETAG). A disordered region spans residues 1–73 (MSVATGSSET…QRRHQQGKVT (73 aa)). An N-acetylserine modification is found at S2. S25 carries the phosphoserine modification. R27 is subject to Omega-N-methylarginine. Residue S33 is modified to Phosphoserine. The segment covering 35-63 (GSSSGSGSSREDSAPVATAAAAGQVQQQQ) has biased composition (low complexity). At T73 the chain carries Phosphothreonine; by ILK1.

It belongs to the PP1 inhibitor family. Has over 600-fold higher inhibitory activity when phosphorylated, creating a molecular switch for regulating the phosphorylation status of PPP1CA substrates and smooth muscle contraction. The main inhibitory site appears to be Thr-73. As to expression, detected in breast cancer.

It localises to the cytoplasm. The protein resides in the membrane. Functionally, inhibitor of the PP1 regulatory subunit PPP1CA. In Homo sapiens (Human), this protein is Protein phosphatase 1 regulatory subunit 14C (PPP1R14C).